The sequence spans 438 residues: Putative B3 domain-containing protein Os04g0676650 (438 aa).

Residues 1-11 (MADARGSSSSS) show a composition bias toward low complexity. Disordered regions lie at residues 1 to 30 (MADARGSSSSSGDGGGGEGKGGAGHGDFVG) and 225 to 285 (SSSH…MNQN). A compositionally biased stretch (gly residues) spans 12–30 (GDGGGGEGKGGAGHGDFVG). Over residues 258-269 (RRSDMESEKNDD) the composition is skewed to basic and acidic residues. Residues 272 to 285 (DQTPVSEPPSMNQN) are compositionally biased toward polar residues. The segment at residues 302–404 (LRKELTNSDV…KFVVRGEKAI (103 aa)) is a DNA-binding region (TF-B3).

The protein resides in the nucleus. The sequence is that of Putative B3 domain-containing protein Os04g0676650 from Oryza sativa subsp. japonica (Rice).